A 358-amino-acid polypeptide reads, in one-letter code: DNA integrity scanning protein DisA (358 aa).

Residues 6–144 enclose the DAC domain; that stretch reads RPTLREAVAR…RGERHVLTDS (139 aa). ATP contacts are provided by residues glycine 73, leucine 91, and 104–108; that span reads TRHRS.

The protein belongs to the DisA family. Homooctamer. It depends on Mg(2+) as a cofactor.

The enzyme catalyses 2 ATP = 3',3'-c-di-AMP + 2 diphosphate. In terms of biological role, participates in a DNA-damage check-point. DisA forms globular foci that rapidly scan along the chromosomes searching for lesions. Also has diadenylate cyclase activity, catalyzing the condensation of 2 ATP molecules into cyclic di-AMP (c-di-AMP). c-di-AMP likely acts as a signaling molecule that may couple DNA integrity with a cellular process. This chain is DNA integrity scanning protein DisA, found in Mycobacterium bovis (strain ATCC BAA-935 / AF2122/97).